Here is a 367-residue protein sequence, read N- to C-terminus: Aminomethyltransferase (367 aa).

Belongs to the GcvT family. The glycine cleavage system is composed of four proteins: P, T, L and H.

The enzyme catalyses N(6)-[(R)-S(8)-aminomethyldihydrolipoyl]-L-lysyl-[protein] + (6S)-5,6,7,8-tetrahydrofolate = N(6)-[(R)-dihydrolipoyl]-L-lysyl-[protein] + (6R)-5,10-methylene-5,6,7,8-tetrahydrofolate + NH4(+). The glycine cleavage system catalyzes the degradation of glycine. The chain is Aminomethyltransferase from Mycobacterium leprae (strain Br4923).